Consider the following 206-residue polypeptide: Small ribosomal subunit protein uS4 (206 aa).

An S4 RNA-binding domain is found at 96 to 156 (GRLDNVVYRM…EKSKKQSRIK (61 aa)).

Belongs to the universal ribosomal protein uS4 family. Part of the 30S ribosomal subunit. Contacts protein S5. The interaction surface between S4 and S5 is involved in control of translational fidelity.

One of the primary rRNA binding proteins, it binds directly to 16S rRNA where it nucleates assembly of the body of the 30S subunit. Its function is as follows. With S5 and S12 plays an important role in translational accuracy. The polypeptide is Small ribosomal subunit protein uS4 (Photorhabdus laumondii subsp. laumondii (strain DSM 15139 / CIP 105565 / TT01) (Photorhabdus luminescens subsp. laumondii)).